A 216-amino-acid polypeptide reads, in one-letter code: uncharacterized protein (216 aa).

This is an uncharacterized protein from Acanthamoeba polyphaga mimivirus (APMV).